The primary structure comprises 174 residues: Gamma-crystallin D (174 aa).

Beta/gamma crystallin 'Greek key' domains follow at residues 2-40 (GKITFYEDRGFQGRHYECSTDHSNLQPYFSRCNSVRVDS) and 41-83 (GCWM…RLIP). Positions 84–87 (HAGS) are connecting peptide. Beta/gamma crystallin 'Greek key' domains are found at residues 88-128 (HRIR…NVLE) and 129-171 (GCWV…RRVM).

Belongs to the beta/gamma-crystallin family. Detected in the superior olivary complex and fibers of the ventral aoustic stria of the auditory hindbrain.

Functionally, crystallins are the dominant structural components of the vertebrate eye lens. This chain is Gamma-crystallin D (Crygd), found in Rattus norvegicus (Rat).